The following is a 53-amino-acid chain: uncharacterized protein (53 aa).

The helical transmembrane segment at 4–24 threads the bilayer; sequence FILLIVGFIYGAGGVLLYSVY.

It localises to the host membrane. This is an uncharacterized protein from Acidianus bottle-shaped virus (isolate Italy/Pozzuoli) (ABV).